A 248-amino-acid chain; its full sequence is Triosephosphate isomerase (248 aa).

Residue 9 to 11 (NWK) coordinates substrate. The active-site Electrophile is the H93. E163 acts as the Proton acceptor in catalysis. Residues G169, S208, and 229–230 (GG) each bind substrate.

The protein belongs to the triosephosphate isomerase family. As to quaternary structure, homodimer.

The protein resides in the cytoplasm. The enzyme catalyses D-glyceraldehyde 3-phosphate = dihydroxyacetone phosphate. It participates in carbohydrate biosynthesis; gluconeogenesis. Its pathway is carbohydrate degradation; glycolysis; D-glyceraldehyde 3-phosphate from glycerone phosphate: step 1/1. Functionally, involved in the gluconeogenesis. Catalyzes stereospecifically the conversion of dihydroxyacetone phosphate (DHAP) to D-glyceraldehyde-3-phosphate (G3P). This chain is Triosephosphate isomerase, found in Jannaschia sp. (strain CCS1).